Reading from the N-terminus, the 652-residue chain is DNA mismatch repair protein MutL (652 aa).

The protein belongs to the DNA mismatch repair MutL/HexB family.

This protein is involved in the repair of mismatches in DNA. It is required for dam-dependent methyl-directed DNA mismatch repair. May act as a 'molecular matchmaker', a protein that promotes the formation of a stable complex between two or more DNA-binding proteins in an ATP-dependent manner without itself being part of a final effector complex. The protein is DNA mismatch repair protein MutL of Neorickettsia sennetsu (strain ATCC VR-367 / Miyayama) (Ehrlichia sennetsu).